Here is a 978-residue protein sequence, read N- to C-terminus: Sensor histidine kinase TodS (978 aa).

The 72-residue stretch at 32–103 (CEEHARIIFD…TQKRLVETAS (72 aa)) folds into the PAS 1 domain. The region spanning 108–162 (VRCDVEILGKSGGREVIAVDFSLLPICNEEGSIVYLLAEGRNITDKKKAEAMLAL) is the PAC 1 domain. A Histidine kinase 1 domain is found at 187–405 (KVSHELRTPL…LFQVKLPLNA (219 aa)). At His190 the chain carries Phosphohistidine; by autocatalysis. A Response regulatory domain is found at 452 to 567 (RVLIVEDNPD…ELRARVSNLV (116 aa)). At Asp500 the chain carries 4-aspartylphosphate. In terms of domain architecture, PAS 2 spans 611 to 681 (SEARWKAVYE…QRLANLLQGG (71 aa)). Positions 685 to 737 (YSVERSYLCKNGSTIWANASVSLMPQRVGESPVILQIIDDITEKKQAQENLNQ) constitute a PAC 2 domain. A Histidine kinase 2 domain is found at 757 to 974 (YIAHEINQPL…CFLVSIPARQ (218 aa)). Position 760 is a phosphohistidine (His760).

In terms of assembly, homodimer. Binds as a dimer to a pseudopalindromic sequence. Post-translationally, autophosphorylated. Activation requires a sequential transfer of a phosphate group from a His in the primary transmitter domain, to an Asp in the receiver domain and to a His in the secondary transmitter domain.

The protein resides in the cytoplasm. The enzyme catalyses ATP + protein L-histidine = ADP + protein N-phospho-L-histidine.. Member of the two-component regulatory system TodS/TodT involved in the regulation of toluene degradation. Phosphorylates TodT via a four-step phosphorelay in response to toluene. This is Sensor histidine kinase TodS (todS) from Pseudomonas putida (strain ATCC 700007 / DSM 6899 / JCM 31910 / BCRC 17059 / LMG 24140 / F1).